We begin with the raw amino-acid sequence, 610 residues long: Sulfite reductase [NADPH] flavoprotein alpha-component (610 aa).

A Flavodoxin-like domain is found at 68–206; that stretch reads IIVISASQTG…EVDKWKEKVV (139 aa). FMN-binding positions include 74 to 79, 121 to 124, and 157 to 166; these read SQTGNA, STHG, and LGDRSYEYFA. The 217-residue stretch at 243–459 folds into the FAD-binding FR-type domain; sequence EFPLIAYLLN…VESNDNFRLP (217 aa). Residues Thr-331, Ser-365, 397–400, 415–417, Tyr-421, and 430–433 each bind FAD; these read RFYS, TVS, and GGAS. NADP(+) is bound by residues 530–531, 536–540, and Asp-572; these read SR and KVYVQ. FAD is bound at residue Tyr-610.

Belongs to the NADPH-dependent sulphite reductase flavoprotein subunit CysJ family. It in the N-terminal section; belongs to the flavodoxin family. This sequence in the C-terminal section; belongs to the flavoprotein pyridine nucleotide cytochrome reductase family. As to quaternary structure, alpha(8)-beta(8). The alpha component is a flavoprotein, the beta component is a hemoprotein. It depends on FAD as a cofactor. FMN serves as cofactor.

It carries out the reaction hydrogen sulfide + 3 NADP(+) + 3 H2O = sulfite + 3 NADPH + 4 H(+). Its pathway is sulfur metabolism; hydrogen sulfide biosynthesis; hydrogen sulfide from sulfite (NADPH route): step 1/1. Its function is as follows. Component of the sulfite reductase complex that catalyzes the 6-electron reduction of sulfite to sulfide. This is one of several activities required for the biosynthesis of L-cysteine from sulfate. The flavoprotein component catalyzes the electron flow from NADPH -&gt; FAD -&gt; FMN to the hemoprotein component. This Blochmanniella floridana protein is Sulfite reductase [NADPH] flavoprotein alpha-component.